A 193-amino-acid chain; its full sequence is Ion-translocating oxidoreductase complex subunit A (193 aa).

Transmembrane regions (helical) follow at residues Leu-5–Leu-25, Ile-39–Val-59, Phe-62–Ala-82, Leu-102–Leu-122, Ala-134–Ile-154, and Ser-171–Val-191.

It belongs to the NqrDE/RnfAE family. As to quaternary structure, the complex is composed of six subunits: RnfA, RnfB, RnfC, RnfD, RnfE and RnfG.

It localises to the cell inner membrane. Its function is as follows. Part of a membrane-bound complex that couples electron transfer with translocation of ions across the membrane. The polypeptide is Ion-translocating oxidoreductase complex subunit A (Yersinia enterocolitica serotype O:8 / biotype 1B (strain NCTC 13174 / 8081)).